The chain runs to 122 residues: Large ribosomal subunit protein uL18 (122 aa).

It belongs to the universal ribosomal protein uL18 family. Part of the 50S ribosomal subunit; part of the 5S rRNA/L5/L18/L25 subcomplex. Contacts the 5S and 23S rRNAs.

Its function is as follows. This is one of the proteins that bind and probably mediate the attachment of the 5S RNA into the large ribosomal subunit, where it forms part of the central protuberance. This chain is Large ribosomal subunit protein uL18, found in Mycobacterium leprae (strain TN).